Reading from the N-terminus, the 1432-residue chain is DNA-directed RNA polymerase subunit beta (1432 aa).

Belongs to the RNA polymerase beta chain family. In terms of assembly, the RNAP catalytic core consists of 2 alpha, 1 beta, 1 beta' and 1 omega subunit. When a sigma factor is associated with the core the holoenzyme is formed, which can initiate transcription.

The enzyme catalyses RNA(n) + a ribonucleoside 5'-triphosphate = RNA(n+1) + diphosphate. DNA-dependent RNA polymerase catalyzes the transcription of DNA into RNA using the four ribonucleoside triphosphates as substrates. This chain is DNA-directed RNA polymerase subunit beta, found in Solibacter usitatus (strain Ellin6076).